The sequence spans 331 residues: DNA double-strand break repair nuclease NurA (331 aa).

The Mn(2+) site is built by Asp56 and Asp131.

The protein belongs to the NurA family. In terms of assembly, homodimer. Interacts with SSB. It depends on Mn(2+) as a cofactor.

With respect to regulation, the 5'-3' ssDNA and dsDNA exonuclease and ssDNA endonuclease activities are inhibited by SSB (single-stranded DNA-binding protein). Its function is as follows. Involved in DNA double-strand break (DSB) repair. Probably acts with HerA to stimulate resection of the 5' strand and produce the long 3' single-strand that is required for RadA loading. Exhibits both single-stranded endonuclease activity and 5'-3' exonuclease activity on single-stranded and double-stranded DNA. In Sulfurisphaera tokodaii (strain DSM 16993 / JCM 10545 / NBRC 100140 / 7) (Sulfolobus tokodaii), this protein is DNA double-strand break repair nuclease NurA.